The following is a 182-amino-acid chain: Large ribosomal subunit protein uL6 (182 aa).

It belongs to the universal ribosomal protein uL6 family. Part of the 50S ribosomal subunit.

Functionally, this protein binds to the 23S rRNA, and is important in its secondary structure. It is located near the subunit interface in the base of the L7/L12 stalk, and near the tRNA binding site of the peptidyltransferase center. This is Large ribosomal subunit protein uL6 from Methanocaldococcus jannaschii (strain ATCC 43067 / DSM 2661 / JAL-1 / JCM 10045 / NBRC 100440) (Methanococcus jannaschii).